The primary structure comprises 418 residues: Protease LasA (418 aa).

The N-terminal stretch at 1–31 is a signal peptide; sequence MQHKRSRAMASPRSPFLFVLLALAVGGTANA. Positions 32–236 are excised as a propeptide; it reads HDDGLPAFRY…ARQLQAKAAL (205 aa). Positions 259 and 272 each coordinate Zn(2+). Cysteines 301 and 347 form a disulfide. Residues His317 and His356 each act as proton donor/acceptor in the active site. Residue His358 coordinates Zn(2+). Cys391 and Cys406 form a disulfide bridge.

The protein belongs to the peptidase M23A family. Requires Zn(2+) as cofactor. In terms of processing, processing of pro-LasA can occur extracellularly and requires elastase (lasB). Secretion and processing may be linked.

It localises to the secreted. In terms of biological role, involved in proteolysis and elastolysis (degradation of the host protein elastin). Has staphylolytic activity (degrades pentaglycine cross-links in cell wall peptidoglycan), preferring Gly-Gly-|-X substrates where X is Ala or Gly. Enhances the elastolytic but not proteolytic activity of elastase (lasB) and elastolytic activity of other proteases. Degradation of host elastin is likely to contribute to the pathogenicity of P.aeruginosa. While either His-317 or His-356 can abstract a proton in the hydrolysis reaction, the same residue performs both functions in a given catalytic cycle, with the other stabilizing the catalytic intermediate. The chain is Protease LasA (lasA) from Pseudomonas aeruginosa (strain ATCC 15692 / DSM 22644 / CIP 104116 / JCM 14847 / LMG 12228 / 1C / PRS 101 / PAO1).